A 420-amino-acid polypeptide reads, in one-letter code: Argininosuccinate synthase (420 aa).

ATP is bound at residue 11–19; that stretch reads AFSGGLDTT. Position 88 (Tyr-88) interacts with L-citrulline. Gly-118 is a binding site for ATP. L-aspartate-binding residues include Thr-120, Asn-124, and Asp-125. Asn-124 is a binding site for L-citrulline. 5 residues coordinate L-citrulline: Arg-128, Ser-174, Ser-183, Glu-257, and Tyr-269. The tract at residues 401 to 420 is disordered; the sequence is KGAAVTDGSGDHAASEDTEE. Basic and acidic residues predominate over residues 409-420; sequence SGDHAASEDTEE.

The protein belongs to the argininosuccinate synthase family. Type 1 subfamily. Homotetramer.

It is found in the cytoplasm. The catalysed reaction is L-citrulline + L-aspartate + ATP = 2-(N(omega)-L-arginino)succinate + AMP + diphosphate + H(+). Its pathway is amino-acid biosynthesis; L-arginine biosynthesis; L-arginine from L-ornithine and carbamoyl phosphate: step 2/3. This chain is Argininosuccinate synthase, found in Haloarcula marismortui (strain ATCC 43049 / DSM 3752 / JCM 8966 / VKM B-1809) (Halobacterium marismortui).